The chain runs to 435 residues: Eukaryotic translation initiation factor 3 subunit E (435 aa).

Positions 219-392 (FFNHAKGRDL…GHVVMGTQPL (174 aa)) constitute a PCI domain.

It belongs to the eIF-3 subunit E family. In terms of assembly, component of the eukaryotic translation initiation factor 3 (eIF-3) complex.

It localises to the cytoplasm. Functionally, component of the eukaryotic translation initiation factor 3 (eIF-3) complex, which is involved in protein synthesis of a specialized repertoire of mRNAs and, together with other initiation factors, stimulates binding of mRNA and methionyl-tRNAi to the 40S ribosome. The eIF-3 complex specifically targets and initiates translation of a subset of mRNAs involved in cell proliferation. The protein is Eukaryotic translation initiation factor 3 subunit E (eIF3-S6) of Aedes aegypti (Yellowfever mosquito).